The following is a 163-amino-acid chain: Nucleotide-binding protein ESA_02876 (163 aa).

This sequence belongs to the YajQ family.

Functionally, nucleotide-binding protein. The polypeptide is Nucleotide-binding protein ESA_02876 (Cronobacter sakazakii (strain ATCC BAA-894) (Enterobacter sakazakii)).